A 339-amino-acid polypeptide reads, in one-letter code: DNA-directed RNA polymerase subunit alpha (339 aa).

Positions M1 to E233 are alpha N-terminal domain (alpha-NTD). The tract at residues K264 to F339 is alpha C-terminal domain (alpha-CTD).

The protein belongs to the RNA polymerase alpha chain family. As to quaternary structure, in plastids the minimal PEP RNA polymerase catalytic core is composed of four subunits: alpha, beta, beta', and beta''. When a (nuclear-encoded) sigma factor is associated with the core the holoenzyme is formed, which can initiate transcription.

Its subcellular location is the plastid. The protein localises to the chloroplast. It carries out the reaction RNA(n) + a ribonucleoside 5'-triphosphate = RNA(n+1) + diphosphate. DNA-dependent RNA polymerase catalyzes the transcription of DNA into RNA using the four ribonucleoside triphosphates as substrates. The sequence is that of DNA-directed RNA polymerase subunit alpha from Aegilops tauschii (Tausch's goatgrass).